The chain runs to 429 residues: Adenylosuccinate synthetase (429 aa).

GTP-binding positions include 11 to 17 (GDEGKGK) and 39 to 41 (GHT). Aspartate 12 (proton acceptor) is an active-site residue. Residues aspartate 12 and glycine 39 each coordinate Mg(2+). Residues 12–15 (DEGK), 37–40 (NAGH), threonine 130, arginine 144, asparagine 226, threonine 241, and arginine 305 each bind IMP. Histidine 40 (proton donor) is an active-site residue. Position 301–307 (301–307 (VTTGRRR)) interacts with substrate. GTP is bound by residues arginine 307, 333 to 335 (KLD), and 415 to 417 (GVG).

It belongs to the adenylosuccinate synthetase family. As to quaternary structure, homodimer. Mg(2+) is required as a cofactor.

It is found in the cytoplasm. It catalyses the reaction IMP + L-aspartate + GTP = N(6)-(1,2-dicarboxyethyl)-AMP + GDP + phosphate + 2 H(+). Its pathway is purine metabolism; AMP biosynthesis via de novo pathway; AMP from IMP: step 1/2. Its function is as follows. Plays an important role in the de novo pathway and in the salvage pathway of purine nucleotide biosynthesis. Catalyzes the first committed step in the biosynthesis of AMP from IMP. In Yarrowia lipolytica (strain CLIB 122 / E 150) (Yeast), this protein is Adenylosuccinate synthetase.